Reading from the N-terminus, the 401-residue chain is Protein zntC (401 aa).

The next 3 helical transmembrane spans lie at 33–53 (GGLI…PWFL), 61–81 (LVSV…GAGF), and 114–134 (ITIV…SGGL). The disordered stretch occupies residues 141–247 (NHMDLSQHNH…SHKDEKDSEK (107 aa)). The span at 167–184 (GDDDDDDVNEDQEEDSTK) shows a compositional bias: acidic residues. The segment covering 200–209 (HNSSNSSSNG) has biased composition (low complexity). A compositionally biased stretch (basic residues) spans 212–225 (HGLKKKKKSKKEHG). The span at 226–247 (HGHNHDHSSNGHSHKDEKDSEK) shows a compositional bias: basic and acidic residues. 5 helical membrane passes run 256–276 (AWVF…GLGS), 285–305 (GLLI…GIAI), 316–336 (CIAL…GMAI), 351–371 (GIIL…ELLP), and 381–401 (KLKL…ALWV).

This sequence belongs to the ZIP transporter (TC 2.A.5) family.

It is found in the membrane. Functionally, may transport divalent cations. May participate, with dstA, in the regulation of the differentiation of stalk cells during development. This Dictyostelium discoideum (Social amoeba) protein is Protein zntC (zntC).